A 914-amino-acid polypeptide reads, in one-letter code: Probable dipeptidyl-aminopeptidase B (914 aa).

Residues 1–10 (MGKSEADEDA) show a composition bias toward acidic residues. Positions 1-81 (MGKSEADEDA…DQPFLPSRKG (81 aa)) are disordered. The Cytoplasmic portion of the chain corresponds to 1 to 89 (MGKSEADEDA…KGSGARARRV (89 aa)). The segment covering 20-34 (SSSAASQTSSDSGLS) has biased composition (low complexity). The chain crosses the membrane as a helical; Signal-anchor for type II membrane protein span at residues 90–110 (FWGLLLLCLAGWVLAFVLFLI). Topologically, residues 111 to 914 (QGRSGYSATS…FKRALPVFVH (804 aa)) are vacuolar. N-linked (GlcNAc...) asparagine glycosylation is found at asparagine 347 and asparagine 638. Residue serine 752 is the Charge relay system of the active site. A glycan (N-linked (GlcNAc...) asparagine) is linked at asparagine 806. Catalysis depends on charge relay system residues aspartate 829 and histidine 862.

It belongs to the peptidase S9B family.

It is found in the vacuole membrane. The enzyme catalyses Release of an N-terminal dipeptide, Xaa-Yaa-|-Zaa-, from a polypeptide, preferentially when Yaa is Pro, provided Zaa is neither Pro nor hydroxyproline.. Type IV dipeptidyl-peptidase which removes N-terminal dipeptides sequentially from polypeptides having unsubstituted N-termini provided that the penultimate residue is proline. This Aspergillus terreus (strain NIH 2624 / FGSC A1156) protein is Probable dipeptidyl-aminopeptidase B (dapB).